The following is a 275-amino-acid chain: Elongation factor Ts (275 aa).

The interval 80–83 (TDFV) is involved in Mg(2+) ion dislocation from EF-Tu.

The protein belongs to the EF-Ts family.

The protein resides in the cytoplasm. Functionally, associates with the EF-Tu.GDP complex and induces the exchange of GDP to GTP. It remains bound to the aminoacyl-tRNA.EF-Tu.GTP complex up to the GTP hydrolysis stage on the ribosome. The protein is Elongation factor Ts of Clavibacter michiganensis subsp. michiganensis (strain NCPPB 382).